The following is a 113-amino-acid chain: Protein suex-1 (113 aa).

The signal sequence occupies residues 1 to 22; it reads MQSLLVFCLATIILSNFTEASA.

The chain is Protein suex-1 from Caenorhabditis elegans.